A 492-amino-acid polypeptide reads, in one-letter code: Lysine--tRNA ligase (492 aa).

Residues Asp-395 and Glu-402 each coordinate Mg(2+).

This sequence belongs to the class-II aminoacyl-tRNA synthetase family. In terms of assembly, homodimer. Mg(2+) serves as cofactor.

The protein localises to the cytoplasm. It carries out the reaction tRNA(Lys) + L-lysine + ATP = L-lysyl-tRNA(Lys) + AMP + diphosphate. This is Lysine--tRNA ligase from Thermus thermophilus (strain ATCC BAA-163 / DSM 7039 / HB27).